The chain runs to 629 residues: tRNA uridine 5-carboxymethylaminomethyl modification enzyme MnmG (629 aa).

FAD-binding positions include 13–18 (GGGHAG), Val125, and Ser180. 273-287 (GPRYCPSIEDKVMRF) is an NAD(+) binding site. Gln370 contributes to the FAD binding site.

This sequence belongs to the MnmG family. Homodimer. Heterotetramer of two MnmE and two MnmG subunits. FAD is required as a cofactor.

The protein resides in the cytoplasm. Functionally, NAD-binding protein involved in the addition of a carboxymethylaminomethyl (cmnm) group at the wobble position (U34) of certain tRNAs, forming tRNA-cmnm(5)s(2)U34. This chain is tRNA uridine 5-carboxymethylaminomethyl modification enzyme MnmG, found in Klebsiella pneumoniae subsp. pneumoniae (strain ATCC 700721 / MGH 78578).